We begin with the raw amino-acid sequence, 186 residues long: MQQVLQEPLIHWALRSFLAALFATAALSKLTGMEEFHGVVRNFRLLPDMASRAVAMVLPVAELAVAAGLMIPALAAPAALAAAALLGVFGLAIAVNVLRGRTQIDCGCFRNGMKQRISWAMVARNAVLTAMALGAAALLPAARPGGTADLATGMLAGSVLFLLYFSASMLGGLPARHPSTASVKGR.

Helical transmembrane passes span 8–28 (PLIH…AALS), 54–74 (VAMV…IPAL), 75–95 (AAPA…AIAV), 119–139 (WAMV…AALL), and 153–173 (GMLA…LGGL).

The protein localises to the cell membrane. Its pathway is one-carbon metabolism; methylamine degradation. Its function is as follows. May be specifically involved in the processing, transport, and/or maturation of the MADH beta-subunit. This Paracoccus versutus (Thiobacillus versutus) protein is Methylamine utilization protein MauE (mauE).